The following is a 181-amino-acid chain: CDP-diacylglycerol--glycerol-3-phosphate 3-phosphatidyltransferase (181 aa).

Transmembrane regions (helical) follow at residues 8 to 28 (PNYLTIARIMVIPVIILAFYI), 35 to 55 (KLGALLFVLASITDFFDGYIA), 64 to 84 (FGKMFDPIADKLLIGCVIIML), and 148 to 168 (IIYLDIVGEIILWIAAFLTII).

Belongs to the CDP-alcohol phosphatidyltransferase class-I family.

Its subcellular location is the cell membrane. The catalysed reaction is a CDP-1,2-diacyl-sn-glycerol + sn-glycerol 3-phosphate = a 1,2-diacyl-sn-glycero-3-phospho-(1'-sn-glycero-3'-phosphate) + CMP + H(+). Its pathway is phospholipid metabolism; phosphatidylglycerol biosynthesis; phosphatidylglycerol from CDP-diacylglycerol: step 1/2. Functionally, this protein catalyzes the committed step to the synthesis of the acidic phospholipids. In Rickettsia felis (strain ATCC VR-1525 / URRWXCal2) (Rickettsia azadi), this protein is CDP-diacylglycerol--glycerol-3-phosphate 3-phosphatidyltransferase (pgsA).